Here is a 370-residue protein sequence, read N- to C-terminus: Protein-tyrosine sulfotransferase 1 (370 aa).

Residues 1–8 (MVGKLKQN) lie on the Cytoplasmic side of the membrane. The chain crosses the membrane as a helical; Signal-anchor for type II membrane protein span at residues 9-25 (LLLACLVISSVTVFYLG). Residues 26–370 (QHAMECHHRI…KEKPQTEQVE (345 aa)) are Lumenal-facing. An N-linked (GlcNAc...) asparagine glycan is attached at Asn60. 79 to 83 (RSGTT) provides a ligand contact to 3'-phosphoadenylyl sulfate. Cysteines 97 and 157 form a disulfide. Glu100 serves as the catalytic Proton donor/acceptor. The tract at residues 102–106 (RVIPR) is interaction with peptide substrate. 3'-phosphoadenylyl sulfate-binding residues include Arg184, Ser192, and Arg196. Cys226 and Cys234 form a disulfide bridge. Tyr239 is a 3'-phosphoadenylyl sulfate binding site. Asn262 carries N-linked (GlcNAc...) asparagine glycosylation. Residues 286 to 295 (STDQVIKPVN) and Lys301 each bind 3'-phosphoadenylyl sulfate.

Belongs to the protein sulfotransferase family. As to quaternary structure, homodimer. Can also form heterodimers with TPST2. Post-translationally, N-glycosylated. In terms of tissue distribution, ubiquitous. Detected in heart, brain, placenta, lung, liver, skeletal muscle, kidney and pancreas.

It localises to the golgi apparatus membrane. The enzyme catalyses L-tyrosyl-[protein] + 3'-phosphoadenylyl sulfate = O-sulfo-L-tyrosine-[protein] + adenosine 3',5'-bisphosphate + H(+). Its function is as follows. Catalyzes the O-sulfation of tyrosine residues within acidic motifs of polypeptides, using 3'-phosphoadenylyl sulfate (PAPS) as cosubstrate. This Homo sapiens (Human) protein is Protein-tyrosine sulfotransferase 1 (TPST1).